Reading from the N-terminus, the 175-residue chain is NADH-quinone oxidoreductase subunit I (175 aa).

2 4Fe-4S ferredoxin-type domains span residues 69–98 and 115–144; these read KRDEQGRERCTACFCCMWICPANAIHIEAA and KKFEINLLRCIFCGLCEEACPKGAIYLDGT. Residues Cys78, Cys81, Cys84, Cys88, Cys124, Cys127, Cys130, and Cys134 each coordinate [4Fe-4S] cluster.

The protein belongs to the complex I 23 kDa subunit family. NDH-1 is composed of 14 different subunits. Subunits NuoA, H, J, K, L, M, N constitute the membrane sector of the complex. Requires [4Fe-4S] cluster as cofactor.

The protein localises to the cell inner membrane. It catalyses the reaction a quinone + NADH + 5 H(+)(in) = a quinol + NAD(+) + 4 H(+)(out). Its function is as follows. NDH-1 shuttles electrons from NADH, via FMN and iron-sulfur (Fe-S) centers, to quinones in the respiratory chain. The immediate electron acceptor for the enzyme in this species is believed to be ubiquinone. Couples the redox reaction to proton translocation (for every two electrons transferred, four hydrogen ions are translocated across the cytoplasmic membrane), and thus conserves the redox energy in a proton gradient. This Leptospira biflexa serovar Patoc (strain Patoc 1 / Ames) protein is NADH-quinone oxidoreductase subunit I.